The following is a 273-amino-acid chain: HMP-PP phosphatase (273 aa).

D8 (nucleophile) is an active-site residue. 3 residues coordinate Mg(2+): D8, D10, and D212.

This sequence belongs to the HAD-like hydrolase superfamily. Cof family. Mg(2+) serves as cofactor.

It catalyses the reaction 4-amino-2-methyl-5-(diphosphooxymethyl)pyrimidine + H2O = 4-amino-2-methyl-5-(phosphooxymethyl)pyrimidine + phosphate + H(+). Catalyzes the hydrolysis of 4-amino-2-methyl-5-hydroxymethylpyrimidine pyrophosphate (HMP-PP) to 4-amino-2-methyl-5-hydroxymethylpyrimidine phosphate (HMP-P). The protein is HMP-PP phosphatase of Yersinia enterocolitica serotype O:8 / biotype 1B (strain NCTC 13174 / 8081).